Here is a 318-residue protein sequence, read N- to C-terminus: tRNA-cytidine(32) 2-sulfurtransferase (318 aa).

Positions 52–57 match the PP-loop motif motif; sequence SGGKDS. Residues cysteine 127, cysteine 130, and cysteine 218 each coordinate [4Fe-4S] cluster.

This sequence belongs to the TtcA family. As to quaternary structure, homodimer. Mg(2+) serves as cofactor. [4Fe-4S] cluster is required as a cofactor.

The protein localises to the cytoplasm. The enzyme catalyses cytidine(32) in tRNA + S-sulfanyl-L-cysteinyl-[cysteine desulfurase] + AH2 + ATP = 2-thiocytidine(32) in tRNA + L-cysteinyl-[cysteine desulfurase] + A + AMP + diphosphate + H(+). It participates in tRNA modification. Functionally, catalyzes the ATP-dependent 2-thiolation of cytidine in position 32 of tRNA, to form 2-thiocytidine (s(2)C32). The sulfur atoms are provided by the cysteine/cysteine desulfurase (IscS) system. This Actinobacillus pleuropneumoniae serotype 3 (strain JL03) protein is tRNA-cytidine(32) 2-sulfurtransferase.